A 326-amino-acid chain; its full sequence is Metal-binding protein YtgA (326 aa).

An N-terminal signal peptide occupies residues 1–21 (MSFFHTRKYKLILRGLLCLAG). His75, His141, His207, and Asp299 together coordinate Fe(2+).

The protein belongs to the bacterial solute-binding protein 9 family. In terms of assembly, monomer.

It localises to the periplasm. Functionally, part of the ATP-binding cassette (ABC) transport system YtgABCD involved in metal import. Binds Fe(2+), Mn(2+) and Ni(2+), with a preference for Fe(2+) and delivers them to the membrane permease for translocation into the cytoplasm. In Chlamydia trachomatis serovar D (strain ATCC VR-885 / DSM 19411 / UW-3/Cx), this protein is Metal-binding protein YtgA.